The sequence spans 572 residues: MDARTWRLGWRCLLLLALLGSTRSEGVESCEEVRKLFQWRLGGAVKGLPEAPRAGPDLQVCLSKNPTCCTRKMEERYQIAARQDLQQVLQTSSSTLKLLISRNAAAFQETLETLIRQAENYTSILFCNTYRNMALEAAASIQEFFTDVGLYLFGADVNPEEFVNRFFDSLFPLVYNHLINPGVTDSSLQYSECIRMARQDVSPFGNIPKRVMGQMGRSLLPGRTFLQALNLGIEVINTTDHIHFSKECSRALLKMQYCPHCQSLMLSKPCMGYCLNVIRGCLAHMTELNPHWHAYIRSLEELSDAMHGTYDVEHVLLNFHLLVNDAVLQAHLNGQKLLDQVNTICGHPVRTPTQSPRCTFDPSKEKHGMKISARNGEETLANRRKEFINSLRLHGSFYGGLADQLCVNELAAPEGRPCWNGEEIVKSYAQRVVGNGIKAQSANPEVRVRGTDPVVNQIIDKLKHVIQLLRGRSPKPNKWELLQPGSGGGMLENSSGDCDDEDGCGGSGSGEVKRTLKITNWMPDSMNFSDVKQVHRADHGSTLDTTSTGCASGTESMALPLMGTLMFLPWLW.

The first 24 residues, 1–24, serve as a signal peptide directing secretion; sequence MDARTWRLGWRCLLLLALLGSTRS. Residues Asn-120 and Asn-237 are each glycosylated (N-linked (GlcNAc...) asparagine). Ser-486 carries an O-linked (Xyl...) (glycosaminoglycan) serine glycan. An N-linked (GlcNAc...) asparagine glycan is attached at Asn-493. 3 O-linked (Xyl...) (glycosaminoglycan) serine glycosylation sites follow: Ser-495, Ser-507, and Ser-509. N-linked (GlcNAc...) asparagine glycosylation occurs at Asn-527.

It belongs to the glypican family.

The protein resides in the cell membrane. The protein localises to the secreted. It localises to the extracellular space. Its function is as follows. Cell surface proteoglycan that bears heparan sulfate. This chain is Glypican-5 (Gpc5), found in Mus musculus (Mouse).